A 403-amino-acid polypeptide reads, in one-letter code: F-box protein At1g60400 (403 aa).

Residues 13-59 (IDRLSALPEHLLCRILSELSTKDSVRTSVLSKHWRNLWLHVPVLELE) form the F-box domain.

The sequence is that of F-box protein At1g60400 from Arabidopsis thaliana (Mouse-ear cress).